The chain runs to 350 residues: Arabinogalactan endo-beta-1,4-galactanase A (350 aa).

Positions 1 to 17 are cleaved as a signal peptide; sequence MILSSLLPLSLVTLTSA. Residue N129 is glycosylated (N-linked (GlcNAc...) asparagine). E153 (proton donor) is an active-site residue. E263 functions as the Nucleophile in the catalytic mechanism.

It belongs to the glycosyl hydrolase 53 family.

The protein localises to the secreted. It catalyses the reaction The enzyme specifically hydrolyzes (1-&gt;4)-beta-D-galactosidic linkages in type I arabinogalactans.. In terms of biological role, endogalactanase involved in the degradation of plant cell wall polysaccharides, and more particularly of hairy regions of pectin. The protein is Arabinogalactan endo-beta-1,4-galactanase A (galA) of Emericella nidulans (strain FGSC A4 / ATCC 38163 / CBS 112.46 / NRRL 194 / M139) (Aspergillus nidulans).